Here is a 516-residue protein sequence, read N- to C-terminus: Polyprenol-phosphate-mannose--protein mannosyltransferase (516 aa).

Helical transmembrane passes span 113–133 (YNGLGWRFSGAVCGVIIVMLV), 143–163 (STLVGAIAGLLIIADGVSFVS), 166–186 (TALLDVFLVMFAVAAFACLMV), 234–254 (WSGLYFVLFFGVMTLVFDAIA), 275–295 (AAYVFGLIPFAVYLASYAPWF), 384–404 (VMLVGTPAMWFIAVPVLGWAL), 413–433 (WRYGAVLVGYMAGFLPWFADI), 437–457 (MYFFYATVMAPFLVLAIALIL), and 473–493 (LGLLTVCFYVALVITNFAWMY).

This sequence belongs to the glycosyltransferase 39 family.

The protein localises to the cell membrane. It participates in protein modification; protein glycosylation. Protein O-mannosyltransferase that catalyzes the transfer of a single mannose residue from a polyprenol phospho-mannosyl lipidic donor to the hydroxyl group of selected serine and threonine residues in acceptor proteins. This chain is Polyprenol-phosphate-mannose--protein mannosyltransferase, found in Mycolicibacterium smegmatis (strain ATCC 700084 / mc(2)155) (Mycobacterium smegmatis).